Here is a 429-residue protein sequence, read N- to C-terminus: Glutamate-1-semialdehyde 2,1-aminomutase (429 aa).

Residue Lys265 is modified to N6-(pyridoxal phosphate)lysine.

The protein belongs to the class-III pyridoxal-phosphate-dependent aminotransferase family. HemL subfamily. Homodimer. Pyridoxal 5'-phosphate is required as a cofactor.

Its subcellular location is the cytoplasm. The catalysed reaction is (S)-4-amino-5-oxopentanoate = 5-aminolevulinate. The protein operates within porphyrin-containing compound metabolism; protoporphyrin-IX biosynthesis; 5-aminolevulinate from L-glutamyl-tRNA(Glu): step 2/2. The chain is Glutamate-1-semialdehyde 2,1-aminomutase from Alkalilimnicola ehrlichii (strain ATCC BAA-1101 / DSM 17681 / MLHE-1).